The following is a 184-amino-acid chain: ATP synthase subunit b, chloroplastic (184 aa).

A helical transmembrane segment spans residues 27-49 (LATNPINLSVVFGVLIFFGKGVL).

Belongs to the ATPase B chain family. As to quaternary structure, F-type ATPases have 2 components, F(1) - the catalytic core - and F(0) - the membrane proton channel. F(1) has five subunits: alpha(3), beta(3), gamma(1), delta(1), epsilon(1). F(0) has four main subunits: a(1), b(1), b'(1) and c(10-14). The alpha and beta chains form an alternating ring which encloses part of the gamma chain. F(1) is attached to F(0) by a central stalk formed by the gamma and epsilon chains, while a peripheral stalk is formed by the delta, b and b' chains.

Its subcellular location is the plastid. The protein localises to the chloroplast thylakoid membrane. In terms of biological role, f(1)F(0) ATP synthase produces ATP from ADP in the presence of a proton or sodium gradient. F-type ATPases consist of two structural domains, F(1) containing the extramembraneous catalytic core and F(0) containing the membrane proton channel, linked together by a central stalk and a peripheral stalk. During catalysis, ATP synthesis in the catalytic domain of F(1) is coupled via a rotary mechanism of the central stalk subunits to proton translocation. Component of the F(0) channel, it forms part of the peripheral stalk, linking F(1) to F(0). This chain is ATP synthase subunit b, chloroplastic, found in Olimarabidopsis pumila (Dwarf rocket).